The following is a 547-amino-acid chain: Rho GTPase-activating protein 36 (547 aa).

Positions 1-40 (MGGCIPFLKAARALCPRIMPPLLLLSAFIFLVSVLGGAPG) are cleaved as a signal peptide. The 201-residue stretch at 226-426 (MSLNPIAKQI…AMIDNWDVLF (201 aa)) folds into the Rho-GAP domain. Residues 485–547 (AVLAQSKPSD…AKTGVSYFFP (63 aa)) are disordered. The span at 524–539 (EQDRPLLRVPREKEAK) shows a compositional bias: basic and acidic residues.

As to quaternary structure, may interacts (via the Rho-GAP domain) with the active form of RAC1. Detected in the outer root sheath of hair follicles at the level of the stem cell bulge, during the anagen and telogen phases of hair growth (at protein level).

GTPase activator for the Rho-type GTPases by converting them to an inactive GDP-bound state. This is Rho GTPase-activating protein 36 (ARHGAP36) from Homo sapiens (Human).